We begin with the raw amino-acid sequence, 431 residues long: Citrate synthase (431 aa).

Active-site residues include histidine 306 and aspartate 364.

The protein belongs to the citrate synthase family.

The enzyme catalyses oxaloacetate + acetyl-CoA + H2O = citrate + CoA + H(+). It functions in the pathway carbohydrate metabolism; tricarboxylic acid cycle; isocitrate from oxaloacetate: step 1/2. In Bartonella henselae (strain ATCC 49882 / DSM 28221 / CCUG 30454 / Houston 1) (Rochalimaea henselae), this protein is Citrate synthase (gltA).